The sequence spans 421 residues: U-box domain-containing protein 26 (421 aa).

Positions 13 to 87 constitute a U-box domain; sequence QIPYHFRCPI…QEWCVANRSN (75 aa).

The catalysed reaction is S-ubiquitinyl-[E2 ubiquitin-conjugating enzyme]-L-cysteine + [acceptor protein]-L-lysine = [E2 ubiquitin-conjugating enzyme]-L-cysteine + N(6)-ubiquitinyl-[acceptor protein]-L-lysine.. Its pathway is protein modification; protein ubiquitination. Its function is as follows. Functions as an E3 ubiquitin ligase. This is U-box domain-containing protein 26 (PUB26) from Arabidopsis thaliana (Mouse-ear cress).